We begin with the raw amino-acid sequence, 458 residues long: BUD13 homolog (458 aa).

Disordered stretches follow at residues 16-37, 81-328, and 437-458; these read SGDIEKKKKKKNKDKNKPSGLR, KQTF…TEEL, and AKTENTKTANQSEYYKSIAEYE. A compositionally biased stretch (basic and acidic residues) spans 138-148; it reads NRHDSDKDNSP. Composition is skewed to basic residues over residues 175–185 and 208–218; these read RNRRSPPRTRR and PRRRPSSPARR. Composition is skewed to basic and acidic residues over residues 219–243, 266–284, and 314–328; these read RKDDDLSPPRKSRKIEEPKKIKKEE, RDLKEESDKLRAKNSKMFE, and DQAKKERETKKTEEL. The stretch at 262 to 356 forms a coiled coil; the sequence is LQSARDLKEE…AQLEEMARVA (95 aa).

Belongs to the CWC26 family.

This Caenorhabditis elegans protein is BUD13 homolog.